The sequence spans 324 residues: MELLPHEKQVVEYEKAIAEFKEKNKKNSLLSSSEIQKLEKRLDKLKEKIYSDLTPWERVQICRHPSRPRTVNYIEGMCEEFVELCGDRTFRDDPAVVGGFVKIQGQRFVLIGQEKGCDTASRLHRNFGMLCPEGFRKALRLGKLAEKFGLPVVFLVDTPGAYPGLTAEERGQGWAIAKNLFELSRLATPVIIVVIGEGCSGGALGMAVGDSVAMLEHSYYSVISPEGCASILWKDPKKNSEAASMLKMHGENLKQFGIIDTVIKEPIGGAHHDPALVYSNVREFIIQEWLRLKDLAIEELLEKRYEKFRSIGLYETTSESGPEA.

The CoA carboxyltransferase C-terminal domain occupies 37 to 291 (KLEKRLDKLK…REFIIQEWLR (255 aa)).

It belongs to the AccA family. In terms of assembly, acetyl-CoA carboxylase is a heterohexamer composed of biotin carboxyl carrier protein (AccB), biotin carboxylase (AccC) and two subunits each of ACCase subunit alpha (AccA) and ACCase subunit beta (AccD).

The protein localises to the cytoplasm. The catalysed reaction is N(6)-carboxybiotinyl-L-lysyl-[protein] + acetyl-CoA = N(6)-biotinyl-L-lysyl-[protein] + malonyl-CoA. Its pathway is lipid metabolism; malonyl-CoA biosynthesis; malonyl-CoA from acetyl-CoA: step 1/1. In terms of biological role, component of the acetyl coenzyme A carboxylase (ACC) complex. First, biotin carboxylase catalyzes the carboxylation of biotin on its carrier protein (BCCP) and then the CO(2) group is transferred by the carboxyltransferase to acetyl-CoA to form malonyl-CoA. This is Acetyl-coenzyme A carboxylase carboxyl transferase subunit alpha from Chlamydia pneumoniae (Chlamydophila pneumoniae).